The following is a 337-amino-acid chain: Sideroflexin-4 (337 aa).

Residue Ser2 is modified to N-acetylserine. The next 3 helical transmembrane spans lie at 111–131, 133–153, and 165–185; these read AAFL…LKGI, SVIL…SING, and SLLM…PQFV. An N6-acetyllysine modification is found at Lys197. 2 helical membrane passes run 251–271 and 293–313; these read ASRI…TYFF and VLAM…IGQI.

The protein belongs to the sideroflexin family.

It is found in the mitochondrion inner membrane. Functionally, mitochondrial amino-acid transporter. Does not act as a serine transporter: not able to mediate transport of serine into mitochondria. The chain is Sideroflexin-4 from Homo sapiens (Human).